We begin with the raw amino-acid sequence, 325 residues long: Lipoyl synthase (325 aa).

The tract at residues 1–32 (MPPLADASTETLSPAEQAAVRHPEKAHRPDQP) is disordered. Residues 19-32 (AVRHPEKAHRPDQP) are compositionally biased toward basic and acidic residues. [4Fe-4S] cluster is bound by residues Cys66, Cys71, Cys77, Cys92, Cys96, Cys99, and Ser305. Residues 78–294 (WAKKHATFMI…AEVANAKGFL (217 aa)) enclose the Radical SAM core domain.

It belongs to the radical SAM superfamily. Lipoyl synthase family. The cofactor is [4Fe-4S] cluster.

It localises to the cytoplasm. The enzyme catalyses [[Fe-S] cluster scaffold protein carrying a second [4Fe-4S](2+) cluster] + N(6)-octanoyl-L-lysyl-[protein] + 2 oxidized [2Fe-2S]-[ferredoxin] + 2 S-adenosyl-L-methionine + 4 H(+) = [[Fe-S] cluster scaffold protein] + N(6)-[(R)-dihydrolipoyl]-L-lysyl-[protein] + 4 Fe(3+) + 2 hydrogen sulfide + 2 5'-deoxyadenosine + 2 L-methionine + 2 reduced [2Fe-2S]-[ferredoxin]. The protein operates within protein modification; protein lipoylation via endogenous pathway; protein N(6)-(lipoyl)lysine from octanoyl-[acyl-carrier-protein]: step 2/2. Its function is as follows. Catalyzes the radical-mediated insertion of two sulfur atoms into the C-6 and C-8 positions of the octanoyl moiety bound to the lipoyl domains of lipoate-dependent enzymes, thereby converting the octanoylated domains into lipoylated derivatives. The protein is Lipoyl synthase of Beijerinckia indica subsp. indica (strain ATCC 9039 / DSM 1715 / NCIMB 8712).